We begin with the raw amino-acid sequence, 166 residues long: Photosystem I assembly protein Ycf3 (166 aa).

TPR repeat units lie at residues 31-64, 68-101, and 116-149; these read AFKY…EEDP, SYIL…NPNL, and GEQA…APNN.

The protein belongs to the Ycf3 family.

The protein resides in the cellular thylakoid membrane. Functionally, essential for the assembly of the photosystem I (PSI) complex. May act as a chaperone-like factor to guide the assembly of the PSI subunits. This is Photosystem I assembly protein Ycf3 from Acaryochloris marina (strain MBIC 11017).